The sequence spans 348 residues: Growth-regulating factor 5 (348 aa).

The 36-residue stretch at 24–59 (VFTAAQWAELEQQALIYKYLVAGVPVPGDLLLPIRP) folds into the QLQ domain. 2 short sequence motifs (bipartite nuclear localization signal) span residues 94–112 (KKLD…KKWR) and 130–137 (RGRNRSRK). The WRC domain occupies 97-141 (DPEPWRCRRTDGKKWRCSKEAHPDSKYCERHMHRGRNRSRKPVES). 2 disordered regions span residues 125 to 165 (ERHM…HDTD) and 306 to 348 (LRPF…PRCD). Residues 127–136 (HMHRGRNRSR) are compositionally biased toward basic residues. Positions 148–161 (PQSQPQLSNVTTAT) are enriched in polar residues. Over residues 306 to 320 (LRPFFDEWPGRRDSW) the composition is skewed to basic and acidic residues. The span at 329 to 340 (NQTSFSTTQLSI) shows a compositional bias: polar residues.

The protein belongs to the GRF family.

The protein localises to the nucleus. Functionally, transcription activator that plays a regulatory role in gibberellin-induced stem elongation. The polypeptide is Growth-regulating factor 5 (GRF5) (Oryza sativa subsp. japonica (Rice)).